A 321-amino-acid polypeptide reads, in one-letter code: L-Ala-D/L-Glu epimerase (321 aa).

Residues threonine 124 and lysine 149 each coordinate substrate. Lysine 151 acts as the Proton acceptor; specific for (R)-substrate epimerization in catalysis. Positions 176, 202, and 225 each coordinate Mg(2+). The active-site Proton acceptor; specific for (S)-substrate epimerization is lysine 247. 3 residues coordinate substrate: cysteine 275, aspartate 297, and aspartate 299.

This sequence belongs to the mandelate racemase/muconate lactonizing enzyme family. Monomer. Mg(2+) is required as a cofactor.

It catalyses the reaction L-alanyl-L-glutamate = L-alanyl-D-glutamate. The protein operates within cell wall biogenesis; peptidoglycan recycling. Functionally, catalyzes the epimerization of L-Ala-D-Glu to L-Ala-L-Glu and has a role in the recycling of the murein peptide, of which L-Ala-D-Glu is a component. Is also able to catalyze the reverse reaction and the epimerization of all the L-Ala-X dipeptides, except L-Ala-L-Arg, L-Ala-L-Lys and L-Ala-L-Pro. Is also active with L-Gly-L-Glu, L-Phe-L-Glu, and L-Ser-L-Glu, but not with L-Glu-L-Glu, L-Lys-L-Glu, L-Pro-L-Glu, L-Lys-L-Ala, or D-Ala-D-Ala. The protein is L-Ala-D/L-Glu epimerase (ycjG) of Escherichia coli (strain K12).